The primary structure comprises 292 residues: Expansin-like protein 6 (292 aa).

The first 24 residues, 1-24 (MIKIIYLIVLLVLLFKNNHIIIKA), serve as a signal peptide directing secretion. The Extracellular segment spans residues 25 to 267 (DDCPFPQIPI…QITSNSNNIL (243 aa)). One can recognise an Expansin-like EG45 domain in the interval 47–150 (HASCGFEKLT…IKVPCPTYGN (104 aa)). 2 disulfides stabilise this stretch: C50/C80 and C83/C145. N92 is a glycosylation site (N-linked (GlcNAc...) asparagine). The helical transmembrane segment at 268–288 (PPSLYIIFLISILFLIINNIF) threads the bilayer. At 289–292 (SNKY) the chain is on the cytoplasmic side.

Belongs to the expansin family. Expansin A subfamily.

It localises to the membrane. Functionally, may serve to lubricate the movement of the cellulose microfibrils during cell growth and wall extension and/or may serve to maintain the fluid state of the slug cell wall. This Dictyostelium discoideum (Social amoeba) protein is Expansin-like protein 6 (expl6).